We begin with the raw amino-acid sequence, 57 residues long: Large ribosomal subunit protein bL32 (57 aa).

Basic residues predominate over residues Met1–Gln19. Residues Met1–Trp20 form a disordered region.

The protein belongs to the bacterial ribosomal protein bL32 family.

This Mycolicibacterium smegmatis (strain ATCC 700084 / mc(2)155) (Mycobacterium smegmatis) protein is Large ribosomal subunit protein bL32.